We begin with the raw amino-acid sequence, 667 residues long: mRNA cap guanine-N(7) methyltransferase (667 aa).

Over residues 1-19 (MYDPARDSWEERDGDEARS) the composition is skewed to basic and acidic residues. The segment at 1 to 272 (MYDPARDSWE…RRRQEERERA (272 aa)) is disordered. Positions 33-52 (FSSSEQIYGASGENNNTTDL) are enriched in polar residues. The span at 72-87 (SPPAQSTTQTPPSIST) shows a compositional bias: low complexity. Residues 88–128 (HVQSPVNPAAQEASNTQSLTSAAQNQSNKSTTTMDNTSGSA) show a composition bias toward polar residues. The segment covering 132–142 (PRADPSDKSNR) has biased composition (basic and acidic residues). The span at 147–156 (ASPTDQNGSQ) shows a compositional bias: polar residues. Basic and acidic residues predominate over residues 256-272 (LVDRETLRRRQEERERA). The mRNA cap 0 methyltransferase domain occupies 309-667 (SKIKGLRSFN…FYHAFCFYKV (359 aa)). 318–319 (NN) serves as a coordination point for mRNA. S-adenosyl-L-methionine-binding positions include Lys322, Gly365, Asp389, Asp427, 470–472 (MFT), and Tyr475. Positions 521-535 (KKERQSQAKKEKTDE) are enriched in basic and acidic residues. Residues 521 to 547 (KKERQSQAKKEKTDEAPEDGEVEEDDG) are disordered. Acidic residues predominate over residues 536 to 547 (APEDGEVEEDDG).

This sequence belongs to the class I-like SAM-binding methyltransferase superfamily. mRNA cap 0 methyltransferase family.

The protein localises to the nucleus. The enzyme catalyses a 5'-end (5'-triphosphoguanosine)-ribonucleoside in mRNA + S-adenosyl-L-methionine = a 5'-end (N(7)-methyl 5'-triphosphoguanosine)-ribonucleoside in mRNA + S-adenosyl-L-homocysteine. Functionally, responsible for methylating the 5'-cap structure of mRNAs. This is mRNA cap guanine-N(7) methyltransferase (abd1) from Neosartorya fischeri (strain ATCC 1020 / DSM 3700 / CBS 544.65 / FGSC A1164 / JCM 1740 / NRRL 181 / WB 181) (Aspergillus fischerianus).